The sequence spans 276 residues: MHFHFSKMHGLGNDFMVVDCITQNVFFSQDLIRRLADRHTGVGFDQLLVVEAPYDPETDFHYRIFNADGSEVEQCGNGARCFARFVRLKGLTNKYSISVSTKKGKMILDVEDDGEVTVNMGVPEFEPNKIPFKAKQKEKTYIMRAGDKTLFCGAVSMGNPHVVTVVDDVDTADVDTLGPLLESHERFPERVNAGFMQVVSRDHIRLRVYERGAGETQACGSGACGAVAVGILQGLLDESVKVSLPGGELHISWQGPGKPLFMTGPATHVFDGQLSC.

The substrate site is built by Asn-13, Gln-46, and Asn-66. Cys-75 functions as the Proton donor in the catalytic mechanism. Substrate contacts are provided by residues 76–77, Asn-159, Asn-192, and 210–211; these read GN and ER. The active-site Proton acceptor is Cys-219. 220-221 is a substrate binding site; the sequence is GS.

It belongs to the diaminopimelate epimerase family. As to quaternary structure, homodimer.

It localises to the cytoplasm. It catalyses the reaction (2S,6S)-2,6-diaminopimelate = meso-2,6-diaminopimelate. Its pathway is amino-acid biosynthesis; L-lysine biosynthesis via DAP pathway; DL-2,6-diaminopimelate from LL-2,6-diaminopimelate: step 1/1. In terms of biological role, catalyzes the stereoinversion of LL-2,6-diaminopimelate (L,L-DAP) to meso-diaminopimelate (meso-DAP), a precursor of L-lysine and an essential component of the bacterial peptidoglycan. In Vibrio parahaemolyticus serotype O3:K6 (strain RIMD 2210633), this protein is Diaminopimelate epimerase.